A 490-amino-acid chain; its full sequence is Bifunctional protein HldE (490 aa).

The tract at residues 1–330 is ribokinase; it reads MERKEIESLF…AEIGHAHPDS (330 aa). Residue 205–208 coordinates ATP; it reads NRKE. Residue Asp275 is part of the active site. The interval 356–490 is cytidylyltransferase; it reads FTNGCFDLLH…EKIRTGSIKE (135 aa).

This sequence in the N-terminal section; belongs to the carbohydrate kinase PfkB family. In the C-terminal section; belongs to the cytidylyltransferase family. Homodimer.

The catalysed reaction is D-glycero-beta-D-manno-heptose 7-phosphate + ATP = D-glycero-beta-D-manno-heptose 1,7-bisphosphate + ADP + H(+). It catalyses the reaction D-glycero-beta-D-manno-heptose 1-phosphate + ATP + H(+) = ADP-D-glycero-beta-D-manno-heptose + diphosphate. It participates in nucleotide-sugar biosynthesis; ADP-L-glycero-beta-D-manno-heptose biosynthesis; ADP-L-glycero-beta-D-manno-heptose from D-glycero-beta-D-manno-heptose 7-phosphate: step 1/4. Its pathway is nucleotide-sugar biosynthesis; ADP-L-glycero-beta-D-manno-heptose biosynthesis; ADP-L-glycero-beta-D-manno-heptose from D-glycero-beta-D-manno-heptose 7-phosphate: step 3/4. In terms of biological role, catalyzes the phosphorylation of D-glycero-D-manno-heptose 7-phosphate at the C-1 position to selectively form D-glycero-beta-D-manno-heptose-1,7-bisphosphate. Functionally, catalyzes the ADP transfer from ATP to D-glycero-beta-D-manno-heptose 1-phosphate, yielding ADP-D-glycero-beta-D-manno-heptose. In Geotalea uraniireducens (strain Rf4) (Geobacter uraniireducens), this protein is Bifunctional protein HldE.